The following is a 78-amino-acid chain: Short neurotoxin OH-5 (78 aa).

The N-terminal stretch at 1-21 (MKNLLLTFLVVTIVCLDLGYT) is a signal peptide. Disulfide bonds link Cys24/Cys40, Cys33/Cys58, Cys62/Cys70, and Cys71/Cys76.

Belongs to the three-finger toxin family. Short-chain subfamily. As to expression, expressed by the venom gland.

The protein resides in the secreted. Functionally, this three-finger toxin binds and inhibits the nicotinic acetylcholine receptor (nAChR). In Ophiophagus hannah (King cobra), this protein is Short neurotoxin OH-5.